A 718-amino-acid polypeptide reads, in one-letter code: Effector protein hopM1 (718 aa).

Residues M1–G10 show a composition bias toward gly residues. Disordered stretches follow at residues M1 to P63 and G683 to R718. Positions S11–P22 are enriched in polar residues. The span at A44–A60 shows a compositional bias: low complexity.

In terms of assembly, interacts with the chaperone ShcM.

The protein localises to the secreted. Its subcellular location is the host membrane. Functionally, involved in the suppression of basal resistance and promotion of disease symptoms in plants. May be involved in the inhibition of a host vesicle trafficking pathway. This Pseudomonas syringae pv. syringae (strain B728a) protein is Effector protein hopM1 (hopM1).